Here is a 256-residue protein sequence, read N- to C-terminus: Hemin import ATP-binding protein HmuV (256 aa).

Residues isoleucine 2–aspartate 238 form the ABC transporter domain. An ATP-binding site is contributed by glycine 34–serine 41.

The protein belongs to the ABC transporter superfamily. Heme (hemin) importer (TC 3.A.1.14.5) family. The complex is composed of two ATP-binding proteins (HmuV), two transmembrane proteins (HmuU) and a solute-binding protein (HmuT).

The protein localises to the cell inner membrane. Part of the ABC transporter complex HmuTUV involved in hemin import. Responsible for energy coupling to the transport system. This Shigella dysenteriae serotype 1 (strain Sd197) protein is Hemin import ATP-binding protein HmuV.